A 469-amino-acid chain; its full sequence is Probable ribonuclease FAU-1 (469 aa).

It belongs to the FAU-1 family.

Functionally, probable RNase involved in rRNA stability through maturation and/or degradation of precursor rRNAs. Binds to RNA in loop regions with AU-rich sequences. The protein is Probable ribonuclease FAU-1 of Pyrococcus horikoshii (strain ATCC 700860 / DSM 12428 / JCM 9974 / NBRC 100139 / OT-3).